The sequence spans 240 residues: 2,3,4,5-tetrahydropyridine-2,6-dicarboxylate N-acetyltransferase (240 aa).

The protein belongs to the transferase hexapeptide repeat family. DapH subfamily.

It catalyses the reaction (S)-2,3,4,5-tetrahydrodipicolinate + acetyl-CoA + H2O = L-2-acetamido-6-oxoheptanedioate + CoA. Its pathway is amino-acid biosynthesis; L-lysine biosynthesis via DAP pathway; LL-2,6-diaminopimelate from (S)-tetrahydrodipicolinate (acetylase route): step 1/3. Its function is as follows. Catalyzes the transfer of an acetyl group from acetyl-CoA to tetrahydrodipicolinate. In Bacillus thuringiensis (strain Al Hakam), this protein is 2,3,4,5-tetrahydropyridine-2,6-dicarboxylate N-acetyltransferase.